A 219-amino-acid chain; its full sequence is Deoxyribose-phosphate aldolase 1 (219 aa).

Asp-87 acts as the Proton donor/acceptor in catalysis. Lys-149 serves as the catalytic Schiff-base intermediate with acetaldehyde. Lys-178 serves as the catalytic Proton donor/acceptor.

It belongs to the DeoC/FbaB aldolase family. DeoC type 1 subfamily.

The protein localises to the cytoplasm. The enzyme catalyses 2-deoxy-D-ribose 5-phosphate = D-glyceraldehyde 3-phosphate + acetaldehyde. It participates in carbohydrate degradation; 2-deoxy-D-ribose 1-phosphate degradation; D-glyceraldehyde 3-phosphate and acetaldehyde from 2-deoxy-alpha-D-ribose 1-phosphate: step 2/2. In terms of biological role, catalyzes a reversible aldol reaction between acetaldehyde and D-glyceraldehyde 3-phosphate to generate 2-deoxy-D-ribose 5-phosphate. The sequence is that of Deoxyribose-phosphate aldolase 1 from Vibrio vulnificus (strain YJ016).